A 330-amino-acid polypeptide reads, in one-letter code: Olfactory receptor 11H6 (330 aa).

Topologically, residues 1–43 (MFFIIHSLVTSVFLTALGPQNRTMHFVTEFVLLGFHGQREMQS) are extracellular. Asn-21 carries an N-linked (GlcNAc...) asparagine glycan. Residues 44–64 (CFFSFILVLYLLTLLGNGAIV) traverse the membrane as a helical segment. Topologically, residues 65 to 72 (CAVKLDRR) are cytoplasmic. The helical transmembrane segment at 73 to 93 (LHTPMYILLGNFAFLEIWYIS) threads the bilayer. Over 94–117 (STVPNMLVNILSEIKTISFSGCFL) the chain is Extracellular. Cys-115 and Cys-207 are oxidised to a cystine. Residues 118–138 (QFYFFFSLGTTECFFLSVMAY) form a helical membrane-spanning segment. Residues 139–157 (DRYLAICRPLHYPSIMTGK) lie on the Cytoplasmic side of the membrane. A helical transmembrane segment spans residues 158–178 (FCIILVCVCWVGGFLCYPVPI). Topologically, residues 179-215 (VLISQLPFCGPNIIDHLVCDPGPLFALACISAPSTEL) are extracellular. Residues 216-235 (ICYTFNSMIIFGPFLSILGS) traverse the membrane as a helical segment. Residues 236–255 (YTLVIRAVLCIPSGAGRTKA) are Cytoplasmic-facing. The helical transmembrane segment at 256 to 276 (FSTCGSHLMVVSLFYGTLMVM) threads the bilayer. Topologically, residues 277-289 (YVSPTSGNPAGMQ) are extracellular. The helical transmembrane segment at 290–310 (KIITLVYTAMTPFLNPLIYSL) threads the bilayer. The Cytoplasmic portion of the chain corresponds to 311–330 (RNKDMKDALKRVLGLTVSQN).

Belongs to the G-protein coupled receptor 1 family.

The protein localises to the cell membrane. Functionally, odorant receptor. This Homo sapiens (Human) protein is Olfactory receptor 11H6 (OR11H6).